The following is a 535-amino-acid chain: CTP synthase (535 aa).

The interval 1-268 (MSTKYIFVTG…DQIVCDHLKL (268 aa)) is amidoligase domain. Ser14 lines the CTP pocket. Ser14 is a UTP binding site. 15-20 (SIGKGI) provides a ligand contact to ATP. An L-glutamine-binding site is contributed by Tyr55. Residue Asp72 participates in ATP binding. Mg(2+) contacts are provided by Asp72 and Glu142. CTP-binding positions include 149 to 151 (DIE), 189 to 194 (KTKPTQ), and Lys225. UTP contacts are provided by residues 189-194 (KTKPTQ) and Lys225. The 243-residue stretch at 293 to 535 (KISLVGKYVE…FVTAAVENSN (243 aa)) folds into the Glutamine amidotransferase type-1 domain. Gly355 provides a ligand contact to L-glutamine. Cys382 acts as the Nucleophile; for glutamine hydrolysis in catalysis. L-glutamine contacts are provided by residues 383–386 (LGMQ), Glu406, and Arg464. Catalysis depends on residues His509 and Glu511.

It belongs to the CTP synthase family. In terms of assembly, homotetramer.

The enzyme catalyses UTP + L-glutamine + ATP + H2O = CTP + L-glutamate + ADP + phosphate + 2 H(+). The catalysed reaction is L-glutamine + H2O = L-glutamate + NH4(+). It catalyses the reaction UTP + NH4(+) + ATP = CTP + ADP + phosphate + 2 H(+). Its pathway is pyrimidine metabolism; CTP biosynthesis via de novo pathway; CTP from UDP: step 2/2. Allosterically activated by GTP, when glutamine is the substrate; GTP has no effect on the reaction when ammonia is the substrate. The allosteric effector GTP functions by stabilizing the protein conformation that binds the tetrahedral intermediate(s) formed during glutamine hydrolysis. Inhibited by the product CTP, via allosteric rather than competitive inhibition. In terms of biological role, catalyzes the ATP-dependent amination of UTP to CTP with either L-glutamine or ammonia as the source of nitrogen. Regulates intracellular CTP levels through interactions with the four ribonucleotide triphosphates. The polypeptide is CTP synthase (Streptococcus pneumoniae (strain ATCC BAA-255 / R6)).